Here is a 360-residue protein sequence, read N- to C-terminus: Membrane-bound lytic murein transglycosylase C (360 aa).

An N-terminal signal peptide occupies residues methionine 1 to serine 16. Cysteine 17 is lipidated: N-palmitoyl cysteine. The S-diacylglycerol cysteine moiety is linked to residue cysteine 17.

The protein belongs to the transglycosylase Slt family.

The protein resides in the cell outer membrane. The enzyme catalyses Exolytic cleavage of the (1-&gt;4)-beta-glycosidic linkage between N-acetylmuramic acid (MurNAc) and N-acetylglucosamine (GlcNAc) residues in peptidoglycan, from either the reducing or the non-reducing ends of the peptidoglycan chains, with concomitant formation of a 1,6-anhydrobond in the MurNAc residue.. In terms of biological role, murein-degrading enzyme. May play a role in recycling of muropeptides during cell elongation and/or cell division. This is Membrane-bound lytic murein transglycosylase C from Salmonella arizonae (strain ATCC BAA-731 / CDC346-86 / RSK2980).